Consider the following 359-residue polypeptide: MAP kinase-activated protein kinase 2 (359 aa).

In terms of domain architecture, Protein kinase spans 20–281 (VTSNTVLGYG…IQDVISNKWI (262 aa)). Residues 26–34 (LGYGINGKV) and lysine 49 each bind ATP. The Proton acceptor role is filled by aspartate 142.

It belongs to the protein kinase superfamily. CAMK Ser/Thr protein kinase family. Post-translationally, phosphorylated and activated by MAP kinase.

The catalysed reaction is L-seryl-[protein] + ATP = O-phospho-L-seryl-[protein] + ADP + H(+). It catalyses the reaction L-threonyl-[protein] + ATP = O-phospho-L-threonyl-[protein] + ADP + H(+). Functionally, its physiological substrate seems to be the small heat shock protein (HSP27/HSP25). The sequence is that of MAP kinase-activated protein kinase 2 (MAPk-Ak2) from Drosophila melanogaster (Fruit fly).